Reading from the N-terminus, the 176-residue chain is ATP synthase subunit b (176 aa).

The helical transmembrane segment at 14–34 (STTLGTMIVVSGAFLILMLLL) threads the bilayer.

It belongs to the ATPase B chain family. In terms of assembly, F-type ATPases have 2 components, F(1) - the catalytic core - and F(0) - the membrane proton channel. F(1) has five subunits: alpha(3), beta(3), gamma(1), delta(1), epsilon(1). F(0) has three main subunits: a(1), b(2) and c(10-14). The alpha and beta chains form an alternating ring which encloses part of the gamma chain. F(1) is attached to F(0) by a central stalk formed by the gamma and epsilon chains, while a peripheral stalk is formed by the delta and b chains.

The protein localises to the cell membrane. Its function is as follows. F(1)F(0) ATP synthase produces ATP from ADP in the presence of a proton or sodium gradient. F-type ATPases consist of two structural domains, F(1) containing the extramembraneous catalytic core and F(0) containing the membrane proton channel, linked together by a central stalk and a peripheral stalk. During catalysis, ATP synthesis in the catalytic domain of F(1) is coupled via a rotary mechanism of the central stalk subunits to proton translocation. In terms of biological role, component of the F(0) channel, it forms part of the peripheral stalk, linking F(1) to F(0). This chain is ATP synthase subunit b, found in Enterococcus faecalis (strain ATCC 700802 / V583).